The chain runs to 299 residues: MSLSKASQPSVKSACVRLPIVVLEPNLAELSTSYVGLVSCKCSVLTCSMMRKMKAFTNTVWLFGNPNNPLHALEPAVEQLLDEYSGDLGSYSQQEKSALRWPSGKPSVHFLQAAHLFFSLKNTWAVETGQENWRGFFHRITSGKKYKFEGDMVIDSCYKIDERRRRMGLPDTFITGLNPIMDVALLQIESLLRVRGLTLNYHLFTSSFLDKPLLDSLYFAIWRDKKKDDGSYSQDEGARQDDPLNPLDELLYLSDLPKPLAHYLNKCPLHNIIMHDEEVREAYLNPIWGKDWPALSSSP.

Residues 66-69 (PNNP) form an involved in inclusion bodies formation region. The segment at 148 to 220 (FEGDMVIDSC…KPLLDSLYFA (73 aa)) is interaction with host TNIP2.

This sequence belongs to the Bandavirus NS-S protein family. Interacts with host TBK1; this interaction antagonizes TBK1 phosphorylation and inhibits TBK1-IRF3 interaction. Interacts with host STAT2; this interaction blocks the nuclear translocation and activation of host STAT2. Interacts with host TNIP2.

It is found in the host cytoplasm. In terms of biological role, plays a role in the inhibition of host RLR-induced interferon-beta activation by inhibiting the phosphorylation of TANK-binding kinase 1/TBK1, thereby blocking IRF3 activation and preventing the establishment of an antiviral state. Also blocks IFN-triggered nuclear translocation and activation of host STAT2. The chain is Non-structural protein NS-S (NSS) from Alces americanus (American moose).